The chain runs to 1558 residues: Eukaryotic translation initiation factor 2-alpha kinase 1 (1558 aa).

In terms of domain architecture, Protein kinase spans 429-789; it reads FFEEKILGCG…AYNLLHESVL (361 aa). ATP is bound by residues 435-443 and lysine 458; that span reads LGCGGFGYV. Aspartate 660 (proton acceptor) is an active-site residue. Residues 1014–1033 form a disordered region; that stretch reads GTSTNNNNNNNNNNMGNNNI.

The protein belongs to the protein kinase superfamily. Ser/Thr protein kinase family. GCN2 subfamily. Post-translationally, auto-phosphorylated.

It catalyses the reaction L-seryl-[protein] + ATP = O-phospho-L-seryl-[protein] + ADP + H(+). It carries out the reaction L-threonyl-[protein] + ATP = O-phospho-L-threonyl-[protein] + ADP + H(+). Its function is as follows. In blood stage parasites, phosphorylates translation factor eIF2alpha in response to amino acid starvation. During the asexual blood stage, involved in the response to the host hormone melatonin which is used by the parasite to modulate its cell cycle. The polypeptide is Eukaryotic translation initiation factor 2-alpha kinase 1 (Plasmodium falciparum (isolate 3D7)).